Here is a 99-residue protein sequence, read N- to C-terminus: Small ribosomal subunit protein uS14m (99 aa).

This sequence belongs to the universal ribosomal protein uS14 family.

It localises to the mitochondrion. In Oenothera berteroana (Bertero's evening primrose), this protein is Small ribosomal subunit protein uS14m (RPS14).